A 103-amino-acid chain; its full sequence is Cyclotide vibi-I (103 aa).

The first 9 residues, 1–9, serve as a signal peptide directing secretion; sequence AAFALPAFA. A propeptide spanning residues 10-69 is cleaved from the precursor; it reads SFEKDVITPAALEAVLNRKAPLSNIMMENDAILNVIANVKTVISNPVLEEALLKTNHGVN. The segment at residues 70–99 is a cross-link (cyclopeptide (Gly-Asn)); the sequence is GIPCGESCVWIPCLTSTVGCSCKSKVCYRN. 3 cysteine pairs are disulfide-bonded: Cys-73–Cys-89, Cys-77–Cys-91, and Cys-82–Cys-96. The propeptide occupies 100-103; it reads SLDN.

In terms of processing, this is a cyclic peptide.

Functionally, probably participates in a plant defense mechanism. This is Cyclotide vibi-I from Viola biflora (Yellow wood violet).